A 138-amino-acid chain; its full sequence is Small ribosomal subunit protein uS11c (138 aa).

The segment at 1-23 (MAKAIPRVGSRKNGRISSRKSAR) is disordered. A compositionally biased stretch (basic residues) spans 9–23 (GSRKNGRISSRKSAR).

The protein belongs to the universal ribosomal protein uS11 family. As to quaternary structure, part of the 30S ribosomal subunit.

The protein resides in the plastid. Its subcellular location is the chloroplast. The polypeptide is Small ribosomal subunit protein uS11c (Coffea arabica (Arabian coffee)).